Reading from the N-terminus, the 197-residue chain is RNA pyrophosphohydrolase (197 aa).

The Nudix hydrolase domain maps to 6-149 (GYRPNVGIVI…KRDVYRKAMK (144 aa)). Positions 38–59 (GGINDGETPEQAMYRELYEEVG) match the Nudix box motif. The interval 165-197 (LSTNNNDEKKANYSAKKPYSPYRNQDKKRKTRV) is disordered.

Belongs to the Nudix hydrolase family. RppH subfamily. A divalent metal cation is required as a cofactor.

Functionally, accelerates the degradation of transcripts by removing pyrophosphate from the 5'-end of triphosphorylated RNA, leading to a more labile monophosphorylated state that can stimulate subsequent ribonuclease cleavage. This Mannheimia succiniciproducens (strain KCTC 0769BP / MBEL55E) protein is RNA pyrophosphohydrolase.